A 585-amino-acid polypeptide reads, in one-letter code: Aspartate--tRNA ligase (585 aa).

Glu-173 contributes to the L-aspartate binding site. The interval 197 to 200 (QTLK) is aspartate. Arg-219 lines the L-aspartate pocket. ATP contacts are provided by residues 219 to 221 (RDE) and Gln-228. L-aspartate is bound at residue His-446. Position 480 (Glu-480) interacts with ATP. Arg-487 contacts L-aspartate. Position 532-535 (532-535 (GLDR)) interacts with ATP.

Belongs to the class-II aminoacyl-tRNA synthetase family. Type 1 subfamily. As to quaternary structure, homodimer.

The protein resides in the cytoplasm. The enzyme catalyses tRNA(Asp) + L-aspartate + ATP = L-aspartyl-tRNA(Asp) + AMP + diphosphate. Functionally, catalyzes the attachment of L-aspartate to tRNA(Asp) in a two-step reaction: L-aspartate is first activated by ATP to form Asp-AMP and then transferred to the acceptor end of tRNA(Asp). This chain is Aspartate--tRNA ligase, found in Bacteroides fragilis (strain YCH46).